Reading from the N-terminus, the 377-residue chain is GDSL esterase/lipase 4 (377 aa).

An N-terminal signal peptide occupies residues 1-21 (MASPRFNSIIIILFICTISLS). Residue serine 44 is the Nucleophile of the active site. 5 N-linked (GlcNAc...) asparagine glycosylation sites follow: asparagine 135, asparagine 188, asparagine 194, asparagine 207, and asparagine 241. Residues aspartate 342 and histidine 345 contribute to the active site. Asparagine 364 carries an N-linked (GlcNAc...) asparagine glycan.

The protein belongs to the 'GDSL' lipolytic enzyme family.

The protein resides in the secreted. The sequence is that of GDSL esterase/lipase 4 (GLIP4) from Arabidopsis thaliana (Mouse-ear cress).